A 387-amino-acid polypeptide reads, in one-letter code: Proline-rich protein 5 (387 aa).

Interaction with RICTOR stretches follow at residues 10 to 96 (MSSP…LTKG) and 189 to 219 (HESR…YGLY). A disordered region spans residues 13–34 (PSLSDLGKREPGAAGTDERGTQ). Basic and acidic residues predominate over residues 18–33 (LGKREPGAAGTDERGT). The residue at position 253 (Ser-253) is a Phosphoserine. Positions 262–387 (NPVAEHEAEG…EAPGGRPSVV (126 aa)) are disordered. Over residues 305 to 314 (SGTFRSSPTP) the composition is skewed to polar residues. Position 373 is a phosphoserine (Ser-373).

The protein belongs to the PROTOR family. In terms of assembly, associated component of the mechanistic target of rapamycin complex 2 (mTORC2). Binds directly to MTOR and RICTOR within the TORC2 complex. Ubiquitously expressed. Expressed at high levels in kidney.

Functionally, associated subunit of mTORC2, which regulates cell growth and survival in response to hormonal signals. mTORC2 is activated by growth factors, but, in contrast to mTORC1, seems to be nutrient-insensitive. mTORC2 seems to function upstream of Rho GTPases to regulate the actin cytoskeleton, probably by activating one or more Rho-type guanine nucleotide exchange factors. PRR5 plays an important role in regulation of PDGFRB expression and in modulation of platelet-derived growth factor signaling. May act as a tumor suppressor in breast cancer. The chain is Proline-rich protein 5 from Mus musculus (Mouse).